Reading from the N-terminus, the 475-residue chain is E3 ubiquitin-protein ligase TRIM62 (475 aa).

Residues 11–54 (CSICLSIYQDPVSLGCEHYFCRRCITEHWVRQEAQGARDCPECR) form an RING-type zinc finger. A B box-type zinc finger spans residues 88–128 (RAARPCQAHDKVKLFCLTDRALLCFFCDEPALHEQHQVTGI). Zn(2+) is bound by residues cysteine 93, histidine 96, cysteine 114, and histidine 120. Residues 127–241 (GIDDAFDELQ…LQERLAETDR (115 aa)) are a coiled coil. Residues 277-475 (PLQYTIWKSL…QPLRINTVRI (199 aa)) form the B30.2/SPRY domain.

It belongs to the TRIM/RBCC family. In terms of assembly, interacts with the ubiquitin-conjugating enzyme, UBE2D2. In terms of processing, polyubiquitinated, autoubiquitinated in the presence of UBE2D2.

Its subcellular location is the cytoplasm. The catalysed reaction is S-ubiquitinyl-[E2 ubiquitin-conjugating enzyme]-L-cysteine + [acceptor protein]-L-lysine = [E2 ubiquitin-conjugating enzyme]-L-cysteine + N(6)-ubiquitinyl-[acceptor protein]-L-lysine.. Its pathway is protein modification; protein ubiquitination. Functionally, E3 ubiquitin ligase that plays a role in antifungal immunity by mediating 'Lys-27'-linked ubiquitination of CARD9 downstream of C-type lectin receptors; leading to CARD9 activation, followed by activation of NF-kappa-B and MAP kinase p38 pathways. E3 ubiquitin ligase activity is dependent on E2 ubiquitin-conjugating enzyme UBE2D2. The sequence is that of E3 ubiquitin-protein ligase TRIM62 from Homo sapiens (Human).